Reading from the N-terminus, the 604-residue chain is Aspartate--tRNA(Asp/Asn) ligase (604 aa).

Glu-175 provides a ligand contact to L-aspartate. The tract at residues 199–202 is aspartate; the sequence is QQFK. Residues Arg-221 and His-456 each contribute to the L-aspartate site. 221 to 223 is a binding site for ATP; sequence RDE. Residue Glu-496 coordinates ATP. Arg-503 provides a ligand contact to L-aspartate. Position 548 to 551 (548 to 551) interacts with ATP; that stretch reads GVDR.

It belongs to the class-II aminoacyl-tRNA synthetase family. Type 1 subfamily. In terms of assembly, homodimer.

It is found in the cytoplasm. It carries out the reaction tRNA(Asx) + L-aspartate + ATP = L-aspartyl-tRNA(Asx) + AMP + diphosphate. Aspartyl-tRNA synthetase with relaxed tRNA specificity since it is able to aspartylate not only its cognate tRNA(Asp) but also tRNA(Asn). Reaction proceeds in two steps: L-aspartate is first activated by ATP to form Asp-AMP and then transferred to the acceptor end of tRNA(Asp/Asn). The polypeptide is Aspartate--tRNA(Asp/Asn) ligase (Methylorubrum extorquens (strain CM4 / NCIMB 13688) (Methylobacterium extorquens)).